The sequence spans 369 residues: Histidinol-phosphate aminotransferase 2 (369 aa).

An N6-(pyridoxal phosphate)lysine modification is found at K229.

This sequence belongs to the class-II pyridoxal-phosphate-dependent aminotransferase family. Histidinol-phosphate aminotransferase subfamily. Homodimer. Pyridoxal 5'-phosphate serves as cofactor.

It catalyses the reaction L-histidinol phosphate + 2-oxoglutarate = 3-(imidazol-4-yl)-2-oxopropyl phosphate + L-glutamate. Its pathway is amino-acid biosynthesis; L-histidine biosynthesis; L-histidine from 5-phospho-alpha-D-ribose 1-diphosphate: step 7/9. The polypeptide is Histidinol-phosphate aminotransferase 2 (hisC2) (Pseudomonas aeruginosa (strain ATCC 15692 / DSM 22644 / CIP 104116 / JCM 14847 / LMG 12228 / 1C / PRS 101 / PAO1)).